The following is a 312-amino-acid chain: Aspartate carbamoyltransferase catalytic subunit (312 aa).

Carbamoyl phosphate contacts are provided by Arg58 and Thr59. Lys86 is an L-aspartate binding site. Positions 108, 136, and 139 each coordinate carbamoyl phosphate. L-aspartate contacts are provided by Arg169 and Arg223. Carbamoyl phosphate-binding residues include Gly264 and Pro265.

The protein belongs to the aspartate/ornithine carbamoyltransferase superfamily. ATCase family. As to quaternary structure, heterododecamer (2C3:3R2) of six catalytic PyrB chains organized as two trimers (C3), and six regulatory PyrI chains organized as three dimers (R2).

The enzyme catalyses carbamoyl phosphate + L-aspartate = N-carbamoyl-L-aspartate + phosphate + H(+). It functions in the pathway pyrimidine metabolism; UMP biosynthesis via de novo pathway; (S)-dihydroorotate from bicarbonate: step 2/3. Functionally, catalyzes the condensation of carbamoyl phosphate and aspartate to form carbamoyl aspartate and inorganic phosphate, the committed step in the de novo pyrimidine nucleotide biosynthesis pathway. The protein is Aspartate carbamoyltransferase catalytic subunit of Heliobacterium modesticaldum (strain ATCC 51547 / Ice1).